We begin with the raw amino-acid sequence, 101 residues long: Small ribosomal subunit protein bS18c (101 aa).

This sequence belongs to the bacterial ribosomal protein bS18 family. Part of the 30S ribosomal subunit.

It is found in the plastid. The protein localises to the chloroplast. The protein is Small ribosomal subunit protein bS18c of Morus indica (Mulberry).